Reading from the N-terminus, the 318-residue chain is Transcription factor zip-4 (318 aa).

Over residues 1–13 the composition is skewed to polar residues; that stretch reads MYNYNYSRGNKSM. Disordered regions lie at residues 1–20, 147–205, 238–257, and 273–318; these read MYNY…PRFH, EKKP…TAAA, NNDA…LQKD, and ELQS…KSNY. Residues 173–190 are compositionally biased toward acidic residues; it reads DYQEEGETSLSDNDESVD. The bZIP domain maps to 228–291; the sequence is EPIYKLKRAR…ERDQQLIKQL (64 aa). Positions 232-266 are basic motif; it reads KLKRARNNDAVRKSRNKAKELQLQKDEEYDEMKKR. The stretch at 242–280 forms a coiled coil; the sequence is VRKSRNKAKELQLQKDEEYDEMKKRITQLEAELQSEREG. Residues 267–274 are leucine-zipper; that stretch reads ITQLEAEL. A compositionally biased stretch (basic and acidic residues) spans 275-298; it reads QSEREGRERDQQLIKQLIREKEST. Residues 307–318 are compositionally biased toward polar residues; sequence RNALESFNKSNY.

It belongs to the bZIP family. C/EBP subfamily.

It localises to the nucleus. Transcription factor that binds to the promoter and the enhancer regions of target genes. Involved in responding to mitochondrial damage. Has a protective role in response to infection by the Gram-negative bacterium P.aeruginosa. The sequence is that of Transcription factor zip-4 from Caenorhabditis elegans.